The primary structure comprises 294 residues: Glyceraldehyde-3-phosphate dehydrogenase (294 aa).

Aspartate 19, arginine 63, and threonine 105 together coordinate NAD(+). D-glyceraldehyde 3-phosphate contacts are provided by residues 134–136 (SCT) and threonine 165. Cysteine 135 (nucleophile) is an active-site residue. The segment at 169–188 (KTVDGPSHKDWRGGRGASQN) is disordered. D-glyceraldehyde 3-phosphate is bound by residues 194–195 (TG) and arginine 217.

This sequence belongs to the glyceraldehyde-3-phosphate dehydrogenase family. As to quaternary structure, homotetramer.

It is found in the cytoplasm. The enzyme catalyses D-glyceraldehyde 3-phosphate + phosphate + NAD(+) = (2R)-3-phospho-glyceroyl phosphate + NADH + H(+). It functions in the pathway carbohydrate degradation; glycolysis; pyruvate from D-glyceraldehyde 3-phosphate: step 1/5. Functionally, catalyzes the oxidative phosphorylation of glyceraldehyde 3-phosphate (G3P) to 1,3-bisphosphoglycerate (BPG) using the cofactor NAD. The first reaction step involves the formation of a hemiacetal intermediate between G3P and a cysteine residue, and this hemiacetal intermediate is then oxidized to a thioester, with concomitant reduction of NAD to NADH. The reduced NADH is then exchanged with the second NAD, and the thioester is attacked by a nucleophilic inorganic phosphate to produce BPG. This chain is Glyceraldehyde-3-phosphate dehydrogenase (gap), found in Citrobacter freundii.